Here is a 520-residue protein sequence, read N- to C-terminus: Trichothecene O-acetyltransferase TRI3 (520 aa).

Residues 1–23 are disordered; the sequence is MGSKLPELPKLSPEKHRWEKSNV. A compositionally biased stretch (basic and acidic residues) spans 12–23; that stretch reads SPEKHRWEKSNV.

The protein belongs to the trichothecene O-acetyltransferase family.

The protein operates within sesquiterpene biosynthesis; trichothecene biosynthesis. Functionally, trichothecene O-acetyltransferase; part of the gene cluster that mediates the production of the antimicrobial trichothecene harzianum A (HA) that plays a role in Botrytis cinerea antagonistic activity and plant defense priming. The biosynthesis of harzianum A begins with the cyclization of farnesyl diphosphate to trichodiene and is catalyzed by the trichodiene synthase TRI5. Trichodiene undergoes a series of oxygenations catalyzed by the cytochrome P450 monooxygenase TRI4. TRI4 controls the addition of 3 oxygens at C-2, C-11, and the C-12, C-13-epoxide to form the intermediate isotrichodiol. Isotrichodiol then undergoes a non-enzymatic isomerization and cyclization to form 12,13-epoxytrichothec-9-ene (EPT) which is further converted to trichodermol by the cytochrome P450 monooxygenase TRI11 via C-4 hydroxylation. The last step of HA synthesis is esterification of an octatriendioyl moiety to the C-4 oxygen of trichodermol. The octatriendioyl moiety is probably produced by the polyketide synthase TRI17 and the esterification performed by the trichothecene O-acetyltransferase TRI3. This chain is Trichothecene O-acetyltransferase TRI3, found in Trichoderma arundinaceum.